Reading from the N-terminus, the 214-residue chain is Peptide methionine sulfoxide reductase MsrA 2 (214 aa).

The active site involves cysteine 45.

This sequence belongs to the MsrA Met sulfoxide reductase family.

The enzyme catalyses L-methionyl-[protein] + [thioredoxin]-disulfide + H2O = L-methionyl-(S)-S-oxide-[protein] + [thioredoxin]-dithiol. It carries out the reaction [thioredoxin]-disulfide + L-methionine + H2O = L-methionine (S)-S-oxide + [thioredoxin]-dithiol. Has an important function as a repair enzyme for proteins that have been inactivated by oxidation. Catalyzes the reversible oxidation-reduction of methionine sulfoxide in proteins to methionine. This is Peptide methionine sulfoxide reductase MsrA 2 (msrA2) from Synechocystis sp. (strain ATCC 27184 / PCC 6803 / Kazusa).